The following is a 474-amino-acid chain: MKLSMPRFDQAPVLVVGDVMLDRYWHGGTSRISPEAPVPVVKVDQIEDRPGGAANVALNIAALGAPASLVGVTGDDEAAESLTNSLKAAGVLARFQRIADQPTIVKLRVMSRHQQLLRIDFEEPFRTDPLALSAEVYSLLDGIKVLVLSDYGKGALKNHQALIQAARKRGIPVLADPKGKDFAIYRGASLITPNLSEFEAIVGHCVDEAQLVTKGAQLMQELDLGALLVTRGEHGMTLLRPDQQALHLPARAREVFDVTGAGDTVISTLAAAIAAGEELPHAVALANLAAGIVVGKLGTAAISAPELRRAIQREEGSERGVLGLEQLLLAVDDARAHKERIVFTNGCFDILHAGHVTYLEQARALGDRLIVAVNDDASVSRLKGPGRPINSVERRMAVLAGLGAVDWVISFPEGTPENLLTHVKPDVLVKGGDYGVDQVVGADIVQAYGGEVRVLGLVENSSTTAIVEKIRGQG.

The segment at M1–E318 is ribokinase. Residue N194–E197 coordinates ATP. Residue D263 is part of the active site. A cytidylyltransferase region spans residues F343–G474.

In the N-terminal section; belongs to the carbohydrate kinase PfkB family. This sequence in the C-terminal section; belongs to the cytidylyltransferase family. In terms of assembly, homodimer.

It carries out the reaction D-glycero-beta-D-manno-heptose 7-phosphate + ATP = D-glycero-beta-D-manno-heptose 1,7-bisphosphate + ADP + H(+). The catalysed reaction is D-glycero-beta-D-manno-heptose 1-phosphate + ATP + H(+) = ADP-D-glycero-beta-D-manno-heptose + diphosphate. The protein operates within nucleotide-sugar biosynthesis; ADP-L-glycero-beta-D-manno-heptose biosynthesis; ADP-L-glycero-beta-D-manno-heptose from D-glycero-beta-D-manno-heptose 7-phosphate: step 1/4. It functions in the pathway nucleotide-sugar biosynthesis; ADP-L-glycero-beta-D-manno-heptose biosynthesis; ADP-L-glycero-beta-D-manno-heptose from D-glycero-beta-D-manno-heptose 7-phosphate: step 3/4. Catalyzes the phosphorylation of D-glycero-D-manno-heptose 7-phosphate at the C-1 position to selectively form D-glycero-beta-D-manno-heptose-1,7-bisphosphate. Functionally, catalyzes the ADP transfer from ATP to D-glycero-beta-D-manno-heptose 1-phosphate, yielding ADP-D-glycero-beta-D-manno-heptose. The sequence is that of Bifunctional protein HldE from Pseudomonas syringae pv. syringae (strain B728a).